Consider the following 538-residue polypeptide: Capsular polysaccharide biosynthesis protein RkpI (538 aa).

Helical transmembrane passes span Leu-16 to Phe-36, Val-70 to Ala-90, Leu-114 to Ala-134, Ile-139 to Phe-159, Leu-170 to Gly-190, and Asn-212 to Val-232.

The protein localises to the cell membrane. Its pathway is capsule biogenesis; capsule polysaccharide biosynthesis. In terms of biological role, involved in antigen K (capsular polysaccharide) biosynthesis. In Rhizobium meliloti (strain 1021) (Ensifer meliloti), this protein is Capsular polysaccharide biosynthesis protein RkpI (rkpI).